The following is a 170-amino-acid chain: Adenine phosphoribosyltransferase (170 aa).

Belongs to the purine/pyrimidine phosphoribosyltransferase family. Homodimer.

The protein localises to the cytoplasm. The enzyme catalyses AMP + diphosphate = 5-phospho-alpha-D-ribose 1-diphosphate + adenine. It participates in purine metabolism; AMP biosynthesis via salvage pathway; AMP from adenine: step 1/1. Catalyzes a salvage reaction resulting in the formation of AMP, that is energically less costly than de novo synthesis. This Bacillus mycoides (strain KBAB4) (Bacillus weihenstephanensis) protein is Adenine phosphoribosyltransferase.